A 682-amino-acid chain; its full sequence is DNA-directed RNA polymerase subunit beta' (682 aa).

4 residues coordinate Zn(2+): C69, C71, C87, and C90. Mg(2+) contacts are provided by D489, D491, and D493.

It belongs to the RNA polymerase beta' chain family. RpoC1 subfamily. In plastids the minimal PEP RNA polymerase catalytic core is composed of four subunits: alpha, beta, beta', and beta''. When a (nuclear-encoded) sigma factor is associated with the core the holoenzyme is formed, which can initiate transcription. Mg(2+) serves as cofactor. Zn(2+) is required as a cofactor.

The protein resides in the plastid. Its subcellular location is the chloroplast. It carries out the reaction RNA(n) + a ribonucleoside 5'-triphosphate = RNA(n+1) + diphosphate. Functionally, DNA-dependent RNA polymerase catalyzes the transcription of DNA into RNA using the four ribonucleoside triphosphates as substrates. This Agrostis stolonifera (Creeping bentgrass) protein is DNA-directed RNA polymerase subunit beta'.